The chain runs to 635 residues: Interferon-induced GTP-binding protein Mx1 (635 aa).

The Dynamin-type G domain occupies 31–309 (DLALPAIAVI…LVHHIELSLP (279 aa)). Residues 41–48 (GDQSSGKS) are G1 motif. 41–48 (GDQSSGKS) is a GTP binding site. The interval 66–68 (VTR) is G2 motif. The interval 147-150 (DLPG) is G3 motif. Residues 147–151 (DLPGI) and 216–219 (TKPD) contribute to the GTP site. Residues 216-219 (TKPD) form a G4 motif region. Positions 248-251 (RCRG) are G5 motif. In terms of domain architecture, GED spans 549-635 (LEELMRHLKS…MEARNYLVKF (87 aa)).

Belongs to the TRAFAC class dynamin-like GTPase superfamily. Dynamin/Fzo/YdjA family.

Its subcellular location is the cytoplasm. The protein is Interferon-induced GTP-binding protein Mx1 (mx1) of Ictalurus punctatus (Channel catfish).